A 149-amino-acid polypeptide reads, in one-letter code: Ribosomal RNA large subunit methyltransferase H (149 aa).

S-adenosyl-L-methionine-binding positions include L71, G98, and 117–122 (LSKLTL).

This sequence belongs to the RNA methyltransferase RlmH family. As to quaternary structure, homodimer.

The protein resides in the cytoplasm. It catalyses the reaction pseudouridine(1915) in 23S rRNA + S-adenosyl-L-methionine = N(3)-methylpseudouridine(1915) in 23S rRNA + S-adenosyl-L-homocysteine + H(+). In terms of biological role, specifically methylates the pseudouridine at position 1915 (m3Psi1915) in 23S rRNA. The sequence is that of Ribosomal RNA large subunit methyltransferase H from Campylobacter jejuni subsp. doylei (strain ATCC BAA-1458 / RM4099 / 269.97).